The chain runs to 412 residues: Histidine--tRNA ligase (412 aa).

This sequence belongs to the class-II aminoacyl-tRNA synthetase family. As to quaternary structure, homodimer.

The protein localises to the cytoplasm. The enzyme catalyses tRNA(His) + L-histidine + ATP = L-histidyl-tRNA(His) + AMP + diphosphate + H(+). The chain is Histidine--tRNA ligase from Maridesulfovibrio salexigens (strain ATCC 14822 / DSM 2638 / NCIMB 8403 / VKM B-1763) (Desulfovibrio salexigens).